We begin with the raw amino-acid sequence, 190 residues long: Dual-action ribosomal maturation protein DarP (190 aa).

The disordered stretch occupies residues 1-31; that stretch reads MIHADHDDNLPDDEEGLPLPPSKSQRKRDMH.

This sequence belongs to the DarP family.

The protein localises to the cytoplasm. Member of a network of 50S ribosomal subunit biogenesis factors which assembles along the 30S-50S interface, preventing incorrect 23S rRNA structures from forming. Promotes peptidyl transferase center (PTC) maturation. This chain is Dual-action ribosomal maturation protein DarP, found in Aromatoleum aromaticum (strain DSM 19018 / LMG 30748 / EbN1) (Azoarcus sp. (strain EbN1)).